Reading from the N-terminus, the 626-residue chain is MSLEISGRELIKSKIIDAPECSGVYKMLDVSKQVIYVGKAKILKKRLTNYIKSDLDNKTLRMIANTYFLEYIITHSEVEALLLEAQLIKKFQPKFNILLKDDKSFPFIKLSLDHDFPQLLKYRGKALSDGKLFGPFASNTQVNTTLTELQKIFKLRSCTDNYFNSRTRPCLQYEIKRCYAPCVGKINKENYRVLVIQVKDFLQCRTRELQENLSKKMQELSSQMRFEEAAEIRDRIKALSYVQLKSRILDVVKNADIISIVHKDLHYCIEVALYRAGQPYGNIPYFFSSTENSTHEEVLEYFLLQFYQKQQVPSEIIMNHEINSKENVIEAIKKINNISDLSIIVPHKGDKAKLVHKAEVNALFSLEQYLKKITKNTEIMFEVKKLFDLPEIPERIEIYDNSHIQGMFAVGVMVVAGKIGFDKKEYRVFSLSSRNFTIGSEIELRDDIKGDDYGMLRQVLTRRFTRLKNEPNKLPSLMIIDGGKGHLTVVKEVMDKFGMNIPFVCMSKGRDRNAGLEQLHMQGKEVFTLDKNLLVMKYLQILRDEAHNFAIKNHRLGRSRAIKISSLDDIDGVGEARKTALLHYFGSYKAVCNATIDELAKVKGISKSLASMIFNVLNRKISLDNS.

Positions 20 to 97 (ECSGVYKMLD…IKKFQPKFNI (78 aa)) constitute a GIY-YIG domain. In terms of domain architecture, UVR spans 207 to 242 (RELQENLSKKMQELSSQMRFEEAAEIRDRIKALSYV).

Belongs to the UvrC family. In terms of assembly, interacts with UvrB in an incision complex.

The protein resides in the cytoplasm. The UvrABC repair system catalyzes the recognition and processing of DNA lesions. UvrC both incises the 5' and 3' sides of the lesion. The N-terminal half is responsible for the 3' incision and the C-terminal half is responsible for the 5' incision. This is UvrABC system protein C from Rickettsia typhi (strain ATCC VR-144 / Wilmington).